The chain runs to 390 residues: Queuine tRNA-ribosyltransferase (390 aa).

The Proton acceptor role is filled by D90. Residues 90–94, D144, Q197, and G224 contribute to the substrate site; that span reads DSGGF. The RNA binding stretch occupies residues 255-261; it reads GVGTPED. D274 (nucleophile) is an active-site residue. Residues 279-283 are RNA binding; important for wobble base 34 recognition; the sequence is TRNAR. Zn(2+) contacts are provided by C312, C314, C317, and H354.

This sequence belongs to the queuine tRNA-ribosyltransferase family. As to quaternary structure, homodimer. Within each dimer, one monomer is responsible for RNA recognition and catalysis, while the other monomer binds to the replacement base PreQ1. Zn(2+) serves as cofactor.

It carries out the reaction 7-aminomethyl-7-carbaguanine + guanosine(34) in tRNA = 7-aminomethyl-7-carbaguanosine(34) in tRNA + guanine. It participates in tRNA modification; tRNA-queuosine biosynthesis. Its function is as follows. Catalyzes the base-exchange of a guanine (G) residue with the queuine precursor 7-aminomethyl-7-deazaguanine (PreQ1) at position 34 (anticodon wobble position) in tRNAs with GU(N) anticodons (tRNA-Asp, -Asn, -His and -Tyr). Catalysis occurs through a double-displacement mechanism. The nucleophile active site attacks the C1' of nucleotide 34 to detach the guanine base from the RNA, forming a covalent enzyme-RNA intermediate. The proton acceptor active site deprotonates the incoming PreQ1, allowing a nucleophilic attack on the C1' of the ribose to form the product. After dissociation, two additional enzymatic reactions on the tRNA convert PreQ1 to queuine (Q), resulting in the hypermodified nucleoside queuosine (7-(((4,5-cis-dihydroxy-2-cyclopenten-1-yl)amino)methyl)-7-deazaguanosine). This chain is Queuine tRNA-ribosyltransferase, found in Leptothrix cholodnii (strain ATCC 51168 / LMG 8142 / SP-6) (Leptothrix discophora (strain SP-6)).